The primary structure comprises 876 residues: Neurotrypsin (876 aa).

A signal peptide spans 1 to 20 (MTLARFVLALMLGALPEVVG). N-linked (GlcNAc...) asparagine glycosylation is present at asparagine 26. The interval 29 to 89 (LHHSHRHSPP…ALQAGHTPRP (61 aa)) is disordered. Low complexity predominate over residues 43 to 54 (YPSYYLPTQQRP). Pro residues predominate over residues 57–72 (TRPPPPLPRFPRPPRA). The region spanning 94-166 (CPAGEPWVSV…GKVDWGYCDC (73 aa)) is the Kringle domain. 20 disulfides stabilise this stretch: cysteine 94/cysteine 166, cysteine 110/cysteine 150, cysteine 139/cysteine 164, cysteine 196/cysteine 260, cysteine 209/cysteine 270, cysteine 240/cysteine 250, cysteine 306/cysteine 370, cysteine 319/cysteine 380, cysteine 350/cysteine 360, cysteine 413/cysteine 476, cysteine 426/cysteine 486, cysteine 456/cysteine 466, cysteine 526/cysteine 590, cysteine 539/cysteine 600, cysteine 570/cysteine 580, cysteine 620/cysteine 751, cysteine 662/cysteine 678, cysteine 766/cysteine 832, cysteine 795/cysteine 809, and cysteine 822/cysteine 851. SRCR domains are found at residues 171–272 (VRLR…TCSF), 281–382 (IRLA…SCTP), 388–488 (IRLA…ACYP), and 501–602 (VRLM…ICDY). The zymogen activation region stretch occupies residues 620 to 631 (CGLRLLHRRQKR). The Peptidase S1 domain occupies 632–875 (IIGGKNSLRG…FVPWIKSVTK (244 aa)). Histidine 677 (charge relay system) is an active-site residue. A glycan (N-linked (GlcNAc...) asparagine) is linked at asparagine 684. Aspartate 727 (charge relay system) is an active-site residue. The Charge relay system role is filled by serine 826.

The protein belongs to the peptidase S1 family.

It localises to the secreted. In terms of biological role, plays a role in neuronal plasticity and the proteolytic action may subserve structural reorganizations associated with learning and memory operations. This Gorilla gorilla gorilla (Western lowland gorilla) protein is Neurotrypsin (PRSS12).